Here is a 528-residue protein sequence, read N- to C-terminus: 3-ketoacyl-CoA synthase 2 (528 aa).

2 helical membrane passes run 36-56 (LGYH…VGLL) and 78-98 (FHFL…TLYF). Residues 97 to 388 (YFTTRPRRIF…FFATLVARKV (292 aa)) form the FAE domain. Catalysis depends on residues C241, H320, H407, H411, and N444.

It belongs to the thiolase-like superfamily. Chalcone/stilbene synthases family. In terms of tissue distribution, expressed in siliques, flowers and stems. In young seedlings, expressed in the central cylinder of primary roots, in emerging lateral roots and in their root cap, but not in aboveground tissues such as hypocotyls, cotyledons and leaves. Expressed in sepals in mature flowers and in the chalaza and micropyle region of developing seeds shortly prior to or just after the detachment from the funiculus. Expressed in roots, flowers, cauline leaves and siliques.

The protein localises to the membrane. It carries out the reaction a very-long-chain acyl-CoA + malonyl-CoA + H(+) = a very-long-chain 3-oxoacyl-CoA + CO2 + CoA. The protein operates within lipid metabolism; fatty acid biosynthesis. Inhibited by K3 herbicides such as allidochlor, anilofos, cafenstrole and flufenacet. Strongly inhibited by metazachlor. Functionally, mediates the synthesis of VLCFAs from 22 to 26 carbons in length (e.g. C22, C24, C26). Involved in the elongation of C20 fatty acid suberin precursors. Functionally redundant with KCS20 in the two-carbon elongation of C22 fatty acids that is required for cuticular wax and root suberin biosynthesis. This Arabidopsis thaliana (Mouse-ear cress) protein is 3-ketoacyl-CoA synthase 2.